The following is a 312-amino-acid chain: Light-independent protochlorophyllide reductase iron-sulfur ATP-binding protein (312 aa).

Residues 55 to 60 and lysine 84 contribute to the ATP site; that span reads GIGKST. Serine 59 is a binding site for Mg(2+). Residues cysteine 140 and cysteine 174 each coordinate [4Fe-4S] cluster. Residues 225 to 226 and 249 to 251 contribute to the ATP site; these read NR and PDL.

Belongs to the NifH/BchL/ChlL family. Homodimer. Protochlorophyllide reductase is composed of three subunits; BchL, BchN and BchB. [4Fe-4S] cluster is required as a cofactor.

It catalyses the reaction chlorophyllide a + oxidized 2[4Fe-4S]-[ferredoxin] + 2 ADP + 2 phosphate = protochlorophyllide a + reduced 2[4Fe-4S]-[ferredoxin] + 2 ATP + 2 H2O. Its pathway is porphyrin-containing compound metabolism; bacteriochlorophyll biosynthesis (light-independent). In terms of biological role, component of the dark-operative protochlorophyllide reductase (DPOR) that uses Mg-ATP and reduced ferredoxin to reduce ring D of protochlorophyllide (Pchlide) to form chlorophyllide a (Chlide). This reaction is light-independent. The L component serves as a unique electron donor to the NB-component of the complex, and binds Mg-ATP. This is Light-independent protochlorophyllide reductase iron-sulfur ATP-binding protein from Rhodopseudomonas palustris (strain BisB18).